A 596-amino-acid chain; its full sequence is Elongation factor 4 (596 aa).

The 182-residue stretch at Asn2–Lys183 folds into the tr-type G domain. Residues Asp14–Thr19 and Asn130–Asp133 contribute to the GTP site.

This sequence belongs to the TRAFAC class translation factor GTPase superfamily. Classic translation factor GTPase family. LepA subfamily.

The protein localises to the cell inner membrane. The catalysed reaction is GTP + H2O = GDP + phosphate + H(+). In terms of biological role, required for accurate and efficient protein synthesis under certain stress conditions. May act as a fidelity factor of the translation reaction, by catalyzing a one-codon backward translocation of tRNAs on improperly translocated ribosomes. Back-translocation proceeds from a post-translocation (POST) complex to a pre-translocation (PRE) complex, thus giving elongation factor G a second chance to translocate the tRNAs correctly. Binds to ribosomes in a GTP-dependent manner. This Campylobacter fetus subsp. fetus (strain 82-40) protein is Elongation factor 4.